The primary structure comprises 493 residues: Neuronal pentraxin receptor (493 aa).

The Cytoplasmic portion of the chain corresponds to 1–2 (MK). A helical; Signal-anchor for type II membrane protein transmembrane segment spans residues 3-23 (FLAVLLAAGMLAFLGAVICII). The Extracellular portion of the chain corresponds to 24–493 (ASVPLAASPA…FDVCKGRAKA (470 aa)). Residues 37–72 (PGGTDNASAASAAGGSGPQRSLSALHSAGGSAGPSV) form a disordered region. Residue asparagine 42 is glycosylated (N-linked (GlcNAc...) asparagine). Low complexity predominate over residues 57–72 (SLSALHSAGGSAGPSV). Asparagine 211 carries an N-linked (GlcNAc...) asparagine glycan. The Pentraxin (PTX) domain maps to 285–487 (DAFKVSIPIR…GAKKAAFDVC (203 aa)). Cysteine 315 and cysteine 376 form a disulfide bridge. The Ca(2+) site is built by asparagine 340, glutamate 418, glutamine 419, aspartate 420, and glutamine 430. Asparagine 456 carries N-linked (GlcNAc...) asparagine glycosylation.

As to quaternary structure, heteropentamer with NPTX1 and/or NPTX2. Also binds taipoxin-associated calcium-binding protein 49 (TCBP49/RCN2). Interacts with KLHL2. Requires Ca(2+) as cofactor. Post-translationally, ubiquitinated by a cullin-RING-based BCR (BTB-CUL3-RBX1) E3 ubiquitin-protein ligase complex containing KLHL2.

The protein localises to the membrane. Its function is as follows. May be involved in mediating uptake of synaptic material during synapse remodeling or in mediating the synaptic clustering of AMPA glutamate receptors at a subset of excitatory synapses. In Mus musculus (Mouse), this protein is Neuronal pentraxin receptor (Nptxr).